Consider the following 120-residue polypeptide: Aspartate 1-decarboxylase (120 aa).

The active-site Schiff-base intermediate with substrate; via pyruvic acid is Ser-24. Ser-24 carries the pyruvic acid (Ser) modification. Thr-56 contributes to the substrate binding site. Residue Tyr-57 is the Proton donor of the active site. 70-72 (GAA) is a binding site for substrate.

Belongs to the PanD family. Heterooctamer of four alpha and four beta subunits. Pyruvate is required as a cofactor. Post-translationally, is synthesized initially as an inactive proenzyme, which is activated by self-cleavage at a specific serine bond to produce a beta-subunit with a hydroxyl group at its C-terminus and an alpha-subunit with a pyruvoyl group at its N-terminus.

The protein localises to the cytoplasm. The catalysed reaction is L-aspartate + H(+) = beta-alanine + CO2. The protein operates within cofactor biosynthesis; (R)-pantothenate biosynthesis; beta-alanine from L-aspartate: step 1/1. In terms of biological role, catalyzes the pyruvoyl-dependent decarboxylation of aspartate to produce beta-alanine. The chain is Aspartate 1-decarboxylase from Pyrobaculum islandicum (strain DSM 4184 / JCM 9189 / GEO3).